The chain runs to 345 residues: Anthranilate phosphoribosyltransferase 1 (345 aa).

5-phospho-alpha-D-ribose 1-diphosphate-binding positions include G86, 89–90 (GD), T94, 96–99 (NIST), 114–122 (KHGGRGVSS), and S126. G86 is a binding site for anthranilate. S98 serves as a coordination point for Mg(2+). R172 contributes to the anthranilate binding site. Residues D231 and E232 each coordinate Mg(2+).

This sequence belongs to the anthranilate phosphoribosyltransferase family. As to quaternary structure, homodimer. It depends on Mg(2+) as a cofactor.

The catalysed reaction is N-(5-phospho-beta-D-ribosyl)anthranilate + diphosphate = 5-phospho-alpha-D-ribose 1-diphosphate + anthranilate. The protein operates within amino-acid biosynthesis; L-tryptophan biosynthesis; L-tryptophan from chorismate: step 2/5. Functionally, catalyzes the transfer of the phosphoribosyl group of 5-phosphorylribose-1-pyrophosphate (PRPP) to anthranilate to yield N-(5'-phosphoribosyl)-anthranilate (PRA). The sequence is that of Anthranilate phosphoribosyltransferase 1 from Ralstonia nicotianae (strain ATCC BAA-1114 / GMI1000) (Ralstonia solanacearum).